Consider the following 443-residue polypeptide: Oxygen-dependent coproporphyrinogen-III oxidase, mitochondrial (443 aa).

A mitochondrion-targeting transit peptide spans methionine 1–arginine 98. The segment at methionine 90–glutamate 111 is disordered. Serine 101 carries the phosphoserine modification. Positions valine 182–lysine 191 are important for dimerization. Serine 233 lines the coproporphyrinogen III pocket. The active-site Proton donor is histidine 247. Asparagine 249–arginine 251 serves as a coordination point for coproporphyrinogen III. The important for dimerization stretch occupies residues tyrosine 381–glutamate 417. The residue at position 393 (lysine 393) is an N6-acetyllysine; alternate. An N6-succinyllysine; alternate modification is found at lysine 393. Glycine 400 to arginine 402 contributes to the coproporphyrinogen III binding site.

Belongs to the aerobic coproporphyrinogen-III oxidase family. In terms of assembly, homodimer.

The protein resides in the mitochondrion intermembrane space. It catalyses the reaction coproporphyrinogen III + O2 + 2 H(+) = protoporphyrinogen IX + 2 CO2 + 2 H2O. The protein operates within porphyrin-containing compound metabolism; protoporphyrin-IX biosynthesis; protoporphyrinogen-IX from coproporphyrinogen-III (O2 route): step 1/1. Involved in the heme biosynthesis. Catalyzes the aerobic oxidative decarboxylation of propionate groups of rings A and B of coproporphyrinogen-III to yield the vinyl groups in protoporphyrinogen-IX. The polypeptide is Oxygen-dependent coproporphyrinogen-III oxidase, mitochondrial (Rattus norvegicus (Rat)).